We begin with the raw amino-acid sequence, 505 residues long: Trans-cinnamate 4-monooxygenase (505 aa).

Residues 3–23 (LILLEKSLLAVFFAVIFSIIV) form a helical membrane-spanning segment. (E)-cinnamate contacts are provided by residues 213-218 (RSRLAQ) and Ala306. Residue Cys447 coordinates heme.

The protein belongs to the cytochrome P450 family. It depends on heme as a cofactor. As to expression, mostly expressed in stems, and, to a lower extent, in bulbs, roots, leaves and flowers.

The protein localises to the membrane. The catalysed reaction is (E)-cinnamate + reduced [NADPH--hemoprotein reductase] + O2 = (E)-4-coumarate + oxidized [NADPH--hemoprotein reductase] + H2O + H(+). Its pathway is alkaloid biosynthesis. It participates in phenylpropanoid metabolism; trans-4-coumarate biosynthesis; trans-4-coumarate from trans-cinnamate: step 1/1. Functionally, catalyzes the first oxidative step of the phenylpropanoid pathway in higher plants by transforming trans-cinnamate into p-coumarate. The compounds formed by this pathway are essential components for lignification, pollination, and defense against ultraviolet light, predators and pathogens. Trans-4-coumarate is a precursor to all amaryllidaceae alkaloids such as galanthamine, lycorine and haemanthamine, and including haemanthamine- and crinamine-type alkaloids, promising anticancer agents. The sequence is that of Trans-cinnamate 4-monooxygenase from Narcissus pseudonarcissus (Daffodil).